A 416-amino-acid chain; its full sequence is Serine hydroxymethyltransferase (416 aa).

Residues leucine 118 and 122 to 124 each bind (6S)-5,6,7,8-tetrahydrofolate; that span reads GHL. Lysine 226 carries the N6-(pyridoxal phosphate)lysine modification. Glutamate 242 is a (6S)-5,6,7,8-tetrahydrofolate binding site.

The protein belongs to the SHMT family. Homodimer. It depends on pyridoxal 5'-phosphate as a cofactor.

The protein resides in the cytoplasm. It carries out the reaction (6R)-5,10-methylene-5,6,7,8-tetrahydrofolate + glycine + H2O = (6S)-5,6,7,8-tetrahydrofolate + L-serine. It functions in the pathway one-carbon metabolism; tetrahydrofolate interconversion. Its pathway is amino-acid biosynthesis; glycine biosynthesis; glycine from L-serine: step 1/1. Catalyzes the reversible interconversion of serine and glycine with tetrahydrofolate (THF) serving as the one-carbon carrier. This reaction serves as the major source of one-carbon groups required for the biosynthesis of purines, thymidylate, methionine, and other important biomolecules. Also exhibits THF-independent aldolase activity toward beta-hydroxyamino acids, producing glycine and aldehydes, via a retro-aldol mechanism. The polypeptide is Serine hydroxymethyltransferase (Helicobacter pylori (strain HPAG1)).